Reading from the N-terminus, the 200-residue chain is Large ribosomal subunit protein uL4 (200 aa).

The interval 38-73 (GRQGTKGQKSRSDVSGGGKRPWRQKGTGRARAGTTR) is disordered.

It belongs to the universal ribosomal protein uL4 family. In terms of assembly, part of the 50S ribosomal subunit.

One of the primary rRNA binding proteins, this protein initially binds near the 5'-end of the 23S rRNA. It is important during the early stages of 50S assembly. It makes multiple contacts with different domains of the 23S rRNA in the assembled 50S subunit and ribosome. Functionally, forms part of the polypeptide exit tunnel. The polypeptide is Large ribosomal subunit protein uL4 (Ectopseudomonas mendocina (strain ymp) (Pseudomonas mendocina)).